A 262-amino-acid polypeptide reads, in one-letter code: MRIALVVEYDGSQYHGWQAQTGLHTIQQAVEFALSKVADSSISVVCAGRTDTGVHATNQVIHFDCEKDRSIRAWIHGANSFLPKDICVKWGKEMPENFHARYSAVSRRYRYVIYNGAIRPGLLRGNVTWQYRQLDHRLMQQGGQCLLGENDFTSFRSVECQSNTPMRNIHQLQVTRHGDLVVLDITANAFLHHMVRNIAGVLIAVGSGKHPVGWVKDVLNAKDRKLGAETAPSYGLYLVQVTYPKEFGLLQNNPGPLFLWEK.

Catalysis depends on aspartate 51, which acts as the Nucleophile. Residue tyrosine 109 coordinates substrate.

The protein belongs to the tRNA pseudouridine synthase TruA family. Homodimer.

It carries out the reaction uridine(38/39/40) in tRNA = pseudouridine(38/39/40) in tRNA. In terms of biological role, formation of pseudouridine at positions 38, 39 and 40 in the anticodon stem and loop of transfer RNAs. This Legionella pneumophila (strain Lens) protein is tRNA pseudouridine synthase A.